The chain runs to 388 residues: Trans-enoyl reductase tenC (388 aa).

51-54 (VDGK) serves as a coordination point for NADP(+). 142-149 (VGIASVGM) lines the substrate pocket. NADP(+)-binding positions include 219-222 (SSES), Tyr-237, and 284-285 (LD). 304–308 (SFTQF) contributes to the substrate binding site. Residue 373–374 (IK) coordinates NADP(+).

It belongs to the zinc-containing alcohol dehydrogenase family. In terms of assembly, monomer.

Its pathway is secondary metabolite biosynthesis. Trans-enoyl reductase; part of the gene cluster that mediates the biosynthesis of tenellin-type 2-pyridones, iron-chelating compounds involved in iron stress tolerance, competition with the natural competitor fungus Metarhizium robertsii and insect hosts infection. TenC collaborates with the hybrid PKS-NRPS synthetase tenS to catalyze the assembly of the polyketide-amino acid backbone, since tenS lacks a designated enoylreductase (ER) domain. Upon formation of the polyketide backbone on the thiotemplate of tenS, the triketide is transferred to the NRPS module and linked to tyrosine to produce the pyrrolidine-2-dione intermediates, including pretellinin A, 11-hydropretellenin A, 12-hydropretellenin A, 13-hydropretellenin A, 14-hydropretellenin A, 12-oxopretellenin A and prototellinin D. The pathway begins with the assembly of the polyketide-amino acid backbone by the hybrid PKS-NRPS tenS with the help of the enoyl reductase tenC. These enzymes catalyze the synthesis of the pyrrolidine-2-dione intermediates pretellinin A, 11-hydropretellenin A, 12-hydropretellenin A, 13-hydropretellenin A, 14-hydropretellenin A, 12-oxopretellenin A and prototellinin D. The cytochrome P450 monooxygenase tenA then catalyzes an oxidative ring expansion of pretenellin A and 14-hydropretellenin A to form the 2-pyridone core, leading to pretenellin B and pyridovericin, respectively. The cytochrome P450 monooxygenase tenB is then required for the selective N-hydroxylation of the 2-pyridone nitrogen of yield tellinin and 15-hydroxytellenin (15-HT), respectively. The UDP-glucosyltransferase GT1 and the methyltransferase MT1, located outside the tenS gene cluster, contribute to the stepwise glycosylation and methylation of 15-HT to obtain the glycoside pyridovericin-N-O-(4-O-methyl-beta-D-glucopyranoside) (PMGP). Additional related compounds such as 1-O-methyl-15-HT, (8Z)-1-O-methyl-15-HT, and O-methyltenellin A are also produced but the enzymes involved in their biosynthesis have still to be determined. This is Trans-enoyl reductase tenC from Beauveria bassiana (strain ARSEF 2860) (White muscardine disease fungus).